Here is a 1266-residue protein sequence, read N- to C-terminus: Neuronal-glial cell adhesion molecule (1266 aa).

Residues 1 to 20 form the signal peptide; it reads MALPMVGLLLLLLLGGPGAA. Residues 21–1130 lie on the Extracellular side of the membrane; sequence ITIPPEYGAH…PQPGGGVCTK (1110 aa). Ig-like C2-type domains are found at residues 36–128, 135–221, 236–322, 327–413, 418–506, and 510–597; these read PELT…NVIA, PKEK…KEPL, PRLL…HSVT, PYWV…AFLH, PLRM…ALLE, and PTRI…AQLR. Cystine bridges form between Cys58–Cys110, Cys154–Cys205, Cys260–Cys306, and Cys348–Cys397. The N-linked (GlcNAc...) asparagine glycan is linked to Asn97. N-linked (GlcNAc...) asparagine glycosylation is found at Asn288, Asn390, Asn434, Asn472, and Asn498. The cysteines at positions 441 and 490 are disulfide-linked. The cysteines at positions 532 and 581 are disulfide-linked. Fibronectin type-III domains are found at residues 603–698, 700–804, 809–930, 934–1021, and 1022–1118; these read PSRD…TPPA, PERN…SGED, YPEN…TPEG, PPEE…TKPE, and PPSP…TNGT. The tract at residues 685–710 is disordered; it reads EHHAPSAPIETPPAAPERNPGGVHGE. Residues Asn712 and Asn819 are each glycosylated (N-linked (GlcNAc...) asparagine). Residues 857-882 are disordered; that stretch reads SRRQAPPDPPQIPQSPAEDPPPFPPV. Residues 862–881 show a composition bias toward pro residues; sequence PPDPPQIPQSPAEDPPPFPP. The Cell attachment site motif lies at 914 to 916; sequence RGD. The tract at residues 1004–1025 is disordered; that stretch reads STPRERPALQTVGSTKPEPPSP. N-linked (GlcNAc...) asparagine glycans are attached at residues Asn1061, Asn1075, Asn1100, and Asn1116. A helical membrane pass occupies residues 1131–1153; that stretch reads GWFIGFVSSVVLLLLILLILCFI. Residues 1154–1266 lie on the Cytoplasmic side of the membrane; sequence KRSKGGKYSV…ASPCAGPPLD (113 aa). A compositionally biased stretch (basic and acidic residues) spans 1163-1195; sequence VKDKEDTQVDSEARPMKDETFGEYRSLESEAEK. A disordered region spans residues 1163-1266; that stretch reads VKDKEDTQVD…ASPCAGPPLD (104 aa). The segment covering 1199-1211 has biased composition (gly residues); sequence SGSGAGSGVGSPG.

Belongs to the immunoglobulin superfamily. L1/neurofascin/NgCAM family. As to quaternary structure, binds to itself and to axonin 1. In terms of tissue distribution, brain.

The protein resides in the cell membrane. Mediates the adhesion of neurons to neurons and neurons to glia. It is involved in neuronal migration, neurite fasciculation and outgrowth. The protein is Neuronal-glial cell adhesion molecule of Gallus gallus (Chicken).